A 284-amino-acid polypeptide reads, in one-letter code: 4-diphosphocytidyl-2-C-methyl-D-erythritol kinase (284 aa).

K14 is an active-site residue. 98-108 (PMGGGLGGGSS) lines the ATP pocket. The active site involves D140.

Belongs to the GHMP kinase family. IspE subfamily.

The enzyme catalyses 4-CDP-2-C-methyl-D-erythritol + ATP = 4-CDP-2-C-methyl-D-erythritol 2-phosphate + ADP + H(+). It functions in the pathway isoprenoid biosynthesis; isopentenyl diphosphate biosynthesis via DXP pathway; isopentenyl diphosphate from 1-deoxy-D-xylulose 5-phosphate: step 3/6. Catalyzes the phosphorylation of the position 2 hydroxy group of 4-diphosphocytidyl-2C-methyl-D-erythritol. The chain is 4-diphosphocytidyl-2-C-methyl-D-erythritol kinase from Shewanella oneidensis (strain ATCC 700550 / JCM 31522 / CIP 106686 / LMG 19005 / NCIMB 14063 / MR-1).